Reading from the N-terminus, the 266-residue chain is Thymidylate synthase (266 aa).

Position 24 (Arg24) interacts with dUMP. His54 serves as a coordination point for (6R)-5,10-methylene-5,6,7,8-tetrahydrofolate. Residue 129-130 (RR) participates in dUMP binding. Cys149 functions as the Nucleophile in the catalytic mechanism. DUMP contacts are provided by residues 169–172 (RSAD), Asn180, and 210–212 (HIY). A (6R)-5,10-methylene-5,6,7,8-tetrahydrofolate-binding site is contributed by Asp172. Ala265 lines the (6R)-5,10-methylene-5,6,7,8-tetrahydrofolate pocket.

Belongs to the thymidylate synthase family. Bacterial-type ThyA subfamily. Homodimer.

Its subcellular location is the cytoplasm. It catalyses the reaction dUMP + (6R)-5,10-methylene-5,6,7,8-tetrahydrofolate = 7,8-dihydrofolate + dTMP. The protein operates within pyrimidine metabolism; dTTP biosynthesis. In terms of biological role, catalyzes the reductive methylation of 2'-deoxyuridine-5'-monophosphate (dUMP) to 2'-deoxythymidine-5'-monophosphate (dTMP) while utilizing 5,10-methylenetetrahydrofolate (mTHF) as the methyl donor and reductant in the reaction, yielding dihydrofolate (DHF) as a by-product. This enzymatic reaction provides an intracellular de novo source of dTMP, an essential precursor for DNA biosynthesis. The chain is Thymidylate synthase from Corynebacterium glutamicum (strain R).